Here is a 193-residue protein sequence, read N- to C-terminus: Ion-translocating oxidoreductase complex subunit A (193 aa).

A run of 6 helical transmembrane segments spans residues 4-24 (FLLL…QFLG), 39-59 (IGMS…SYLV), 63-83 (ILLP…VIAV), 102-122 (LLGI…VALL), 134-154 (VIYG…FAAM), and 171-191 (SISM…TGLV).

This sequence belongs to the NqrDE/RnfAE family. In terms of assembly, the complex is composed of six subunits: RnfA, RnfB, RnfC, RnfD, RnfE and RnfG.

It localises to the cell inner membrane. In terms of biological role, part of a membrane-bound complex that couples electron transfer with translocation of ions across the membrane. The sequence is that of Ion-translocating oxidoreductase complex subunit A from Pseudoalteromonas atlantica (strain T6c / ATCC BAA-1087).